Reading from the N-terminus, the 185-residue chain is Ribosome-recycling factor (185 aa).

Belongs to the RRF family.

It localises to the cytoplasm. Its function is as follows. Responsible for the release of ribosomes from messenger RNA at the termination of protein biosynthesis. May increase the efficiency of translation by recycling ribosomes from one round of translation to another. In Hydrogenovibrio crunogenus (strain DSM 25203 / XCL-2) (Thiomicrospira crunogena), this protein is Ribosome-recycling factor.